An 86-amino-acid chain; its full sequence is Neurotoxin-like protein pMD18-NTL3 (86 aa).

Positions 1–21 (MKTLLLTLVVLTIACLDLGYT) are cleaved as a signal peptide. 4 disulfide bridges follow: Cys24–Cys45, Cys38–Cys62, Cys66–Cys78, and Cys79–Cys84.

Belongs to the three-finger toxin family. Short-chain subfamily. Orphan group IX sub-subfamily. Expressed by the venom gland.

It is found in the secreted. The polypeptide is Neurotoxin-like protein pMD18-NTL3 (Bungarus multicinctus (Many-banded krait)).